A 90-amino-acid chain; its full sequence is Acylphosphatase (90 aa).

The Acylphosphatase-like domain occupies 3–88 (TWHMTAHGRV…GKFEDFDLRP (86 aa)). Active-site residues include R18 and N36.

This sequence belongs to the acylphosphatase family.

The enzyme catalyses an acyl phosphate + H2O = a carboxylate + phosphate + H(+). In Cupriavidus pinatubonensis (strain JMP 134 / LMG 1197) (Cupriavidus necator (strain JMP 134)), this protein is Acylphosphatase (acyP).